Here is a 2000-residue protein sequence, read N- to C-terminus: E3 ubiquitin-protein ligase TTC3 (2000 aa).

Positions 20 to 249 (MDDFAEGGLS…RHSCMQCVKQ (230 aa)) are interaction with POLG. TPR repeat units lie at residues 250–283 (GELMKMRGNEEFAKEKFEIAVIYYTRAIEYRPEN) and 284–317 (HLLYGNRALCFLRMGQFRNALSDGKRAIVLKNTW). Ser-397 is modified (phosphoserine). The interval 442–478 (CDCHPEFLPPPSQPPRHKGKQKSRNNESEKPSSNSQV) is disordered. TPR repeat units follow at residues 556 to 592 (VLVVYGLAVSLLGIGRPEELSEAENQFKRIIEHYPNE) and 596 to 629 (CLAYCGIGKVYLKKNRFLEALNHFEKAKTLICRL). The tract at residues 804-828 (AQERMEEDLRESNPPKPEEPEETVE) is disordered. Phosphoserine is present on Ser-1029. Disordered regions lie at residues 1041-1087 (NKGK…GPFA), 1233-1308 (FQPD…PEDA), 1423-1448 (QSSTADARTALSEPEGNSRHSGSSDS), 1806-1839 (LEVKKASQVSPSEQNPEADEKPSGQATRSSQSQK), and 1894-1947 (EEQK…VPAP). The span at 1059–1070 (GTASVTPSSETV) shows a compositional bias: polar residues. Ser-1080 bears the Phosphoserine mark. The span at 1268–1277 (DSDSSSGSAS) shows a compositional bias: low complexity. A compositionally biased stretch (polar residues) spans 1829–1839 (GQATRSSQSQK). The segment covering 1894-1911 (EEQKKKKPNPGKDKKTSE) has biased composition (basic and acidic residues). Low complexity predominate over residues 1912 to 1934 (AHPAASVSKSSPSPPLAAAGPSA). An RING-type; atypical zinc finger spans residues 1952–1991 (CQICHEIFKSKNMRVLKCGHKFHKGCFKQWLKGQSTCPTC).

In terms of assembly, interacts (when phosphorylated on Ser-397) with AKT1, AKT2 and AKT3 (when phosphorylated). Interacts with CIT. Interacts with POLG. Interacts with HSP70. Interacts with SMURF2. In terms of processing, phosphorylation on Ser-397 by Akt is required for ubiquitin ligase activity. Proteolytically cleaved into differently sized N- and C-terminal fragments.

The protein localises to the nucleus. It is found in the cytoplasm. It localises to the golgi apparatus. It carries out the reaction S-ubiquitinyl-[E2 ubiquitin-conjugating enzyme]-L-cysteine + [acceptor protein]-L-lysine = [E2 ubiquitin-conjugating enzyme]-L-cysteine + N(6)-ubiquitinyl-[acceptor protein]-L-lysine.. The protein operates within protein modification; protein ubiquitination. Its function is as follows. E3 ubiquitin-protein ligase which catalyzes the formation of 'Lys-48'-polyubiquitin chains. Mediates the ubiquitination and subsequent degradation of phosphorylated Akt (AKT1, AKT2 and AKT3) in the nucleus. Acts as a terminal regulator of Akt signaling after activation; its phosphorylation by Akt, which is a prerequisite for ubiquitin ligase activity, suggests the existence of a regulation mechanism required to control Akt levels after activation. Positively regulates TGFB1-induced epithelial-mesenchymal transition and myofibroblast differentiation by mediating the ubiquitination and subsequent degradation of SMURF2. Regulates neuronal differentiation by regulating actin remodeling and Golgi organization via a signaling cascade involving RHOA, CIT and ROCK. Inhibits cell proliferation. This chain is E3 ubiquitin-protein ligase TTC3, found in Rattus norvegicus (Rat).